The chain runs to 331 residues: MAKMYYDKDADLNLLKNKKIAIIGFGSQGHAHALNLKDSGLDVVVGLYEGSKSKERAEKEGLRVYTVEEAAKVADIIMILIPDEKQAKVYKESIEKNLTEGKALAFAHGFNIHFKQIVPPKNVDVFMVAPKGPGHLVRRVYQEGKGVPNLVAVYQDYTGKAFDLALAYAKGIGGTRAGVIETTFKEETETDLFGEQAVLCGGVTELMKAGFETLVEAGYQPEIAYFECVHEMKLIVDLIYEGGFSYMRYSISDTAEFGDYMTGKRIITEETRKEMKKVLSEIQSGKFAKEWLLENQVGRPQYNAIKDKEANHLIEKVGKGLREMMAWIKKE.

The KARI N-terminal Rossmann domain maps to 2–182 (AKMYYDKDAD…GGTRAGVIET (181 aa)). Residues 25 to 28 (FGSQ), serine 51, serine 53, and 83 to 86 (DEKQ) each bind NADP(+). Histidine 108 is an active-site residue. Position 134 (glycine 134) interacts with NADP(+). One can recognise a KARI C-terminal knotted domain in the interval 183–328 (TFKEETETDL…KGLREMMAWI (146 aa)). The Mg(2+) site is built by aspartate 191, glutamate 195, glutamate 227, and glutamate 231. Serine 252 serves as a coordination point for substrate.

The protein belongs to the ketol-acid reductoisomerase family. It depends on Mg(2+) as a cofactor.

The catalysed reaction is (2R)-2,3-dihydroxy-3-methylbutanoate + NADP(+) = (2S)-2-acetolactate + NADPH + H(+). The enzyme catalyses (2R,3R)-2,3-dihydroxy-3-methylpentanoate + NADP(+) = (S)-2-ethyl-2-hydroxy-3-oxobutanoate + NADPH + H(+). It participates in amino-acid biosynthesis; L-isoleucine biosynthesis; L-isoleucine from 2-oxobutanoate: step 2/4. Its pathway is amino-acid biosynthesis; L-valine biosynthesis; L-valine from pyruvate: step 2/4. In terms of biological role, involved in the biosynthesis of branched-chain amino acids (BCAA). Catalyzes an alkyl-migration followed by a ketol-acid reduction of (S)-2-acetolactate (S2AL) to yield (R)-2,3-dihydroxy-isovalerate. In the isomerase reaction, S2AL is rearranged via a Mg-dependent methyl migration to produce 3-hydroxy-3-methyl-2-ketobutyrate (HMKB). In the reductase reaction, this 2-ketoacid undergoes a metal-dependent reduction by NADPH to yield (R)-2,3-dihydroxy-isovalerate. The sequence is that of Ketol-acid reductoisomerase (NADP(+)) from Thermoanaerobacter pseudethanolicus (strain ATCC 33223 / 39E) (Clostridium thermohydrosulfuricum).